The following is a 167-amino-acid chain: cAMP-dependent protein kinase type I-alpha regulatory subunit (167 aa).

Thr-12 is modified (phosphothreonine). 2 positions are modified to phosphoserine: Ser-14 and Ser-20. Positions 30-33 (RGAI) match the Pseudophosphorylation motif motif. A Phosphoserine modification is found at Ser-34. 3',5'-cyclic AMP is bound by residues 51–78 (LFSH…SKVS), 79–167 (ILES…ILKR), Glu-147, and Arg-156. Residue Ser-82 is modified to Phosphoserine.

The protein belongs to the cAMP-dependent kinase regulatory chain family. As to quaternary structure, the inactive holoenzyme is composed of two regulatory chains and two catalytic chains. Activation by cAMP releases the two active catalytic monomers and the regulatory dimer. Interacts with PRKACA and PRKACB. PRKAR1A also interacts with RFC2; the complex may be involved in cell survival. Interacts with AKAP4. Interacts with RARA; the interaction occurs in the presence of cAMP or FSH and regulates RARA transcriptional activity. Interacts with the phosphorylated form of PJA2. Interacts with CBFA2T3. Interacts with PRKX; regulates this cAMP-dependent protein kinase. Interacts with smAKAP; this interaction may target PRKAR1A to the plasma membrane. Interacts with AICDA. The pseudophosphorylation site binds to the substrate-binding region of the catalytic chain, resulting in the inhibition of its activity.

It localises to the cell membrane. Functionally, regulatory subunit of the cAMP-dependent protein kinases involved in cAMP signaling in cells. This is cAMP-dependent protein kinase type I-alpha regulatory subunit from Mesocricetus auratus (Golden hamster).